The following is a 243-amino-acid chain: Chromosome partition protein MukE (243 aa).

A disordered region spans residues 223–243 (LMENDTKSADEIDEEFDGEQE). Residues 233-243 (EIDEEFDGEQE) are compositionally biased toward acidic residues.

The protein belongs to the MukE family. As to quaternary structure, interacts, and probably forms a ternary complex, with MukF and MukB. The complex formation is stimulated by calcium or magnesium.

It is found in the cytoplasm. It localises to the nucleoid. Its function is as follows. Involved in chromosome condensation, segregation and cell cycle progression. May participate in facilitating chromosome segregation by condensation DNA from both sides of a centrally located replisome during cell division. Probably acts via its interaction with MukB and MukF. This chain is Chromosome partition protein MukE, found in Haemophilus influenzae (strain ATCC 51907 / DSM 11121 / KW20 / Rd).